Reading from the N-terminus, the 166-residue chain is Regulator of ribonuclease activity A (166 aa).

It belongs to the RraA family. As to quaternary structure, homotrimer. Binds to both RNA-binding sites in the C-terminal region of Rne and to RhlB.

Its subcellular location is the cytoplasm. Its function is as follows. Globally modulates RNA abundance by binding to RNase E (Rne) and regulating its endonucleolytic activity. Can modulate Rne action in a substrate-dependent manner by altering the composition of the degradosome. Modulates RNA-binding and helicase activities of the degradosome. The protein is Regulator of ribonuclease activity A of Histophilus somni (strain 2336) (Haemophilus somnus).